The following is a 436-amino-acid chain: Enolase (436 aa).

Gln-167 serves as a coordination point for (2R)-2-phosphoglycerate. Residue Glu-209 is the Proton donor of the active site. Positions 246, 291, and 318 each coordinate Mg(2+). (2R)-2-phosphoglycerate-binding residues include Lys-343, Arg-372, Ser-373, and Lys-394. The Proton acceptor role is filled by Lys-343.

The protein belongs to the enolase family. Component of the RNA degradosome, a multiprotein complex involved in RNA processing and mRNA degradation. It depends on Mg(2+) as a cofactor.

It localises to the cytoplasm. The protein localises to the secreted. It is found in the cell surface. The catalysed reaction is (2R)-2-phosphoglycerate = phosphoenolpyruvate + H2O. Its pathway is carbohydrate degradation; glycolysis; pyruvate from D-glyceraldehyde 3-phosphate: step 4/5. In terms of biological role, catalyzes the reversible conversion of 2-phosphoglycerate (2-PG) into phosphoenolpyruvate (PEP). It is essential for the degradation of carbohydrates via glycolysis. This is Enolase from Haemophilus influenzae (strain PittGG).